The chain runs to 651 residues: Protein RcaC (651 aa).

Positions 2–116 (KILLVEDDDV…ELIARIRALL (115 aa)) constitute a Response regulatory 1 domain. Residue Asp51 is modified to 4-aspartylphosphate. A DNA-binding region (ompR/PhoB-type) is located at residues 124 to 223 (FPLLTWGDLL…MHGRGYYLKA (100 aa)). Response regulatory domains are found at residues 384–519 (LLLM…VNLL) and 527–643 (KVMI…LRRL).

Functionally, required for chromatic adaptation. Thought to be a positive regulator of phycobiliproteins. In Microchaete diplosiphon (Fremyella diplosiphon), this protein is Protein RcaC (rcaC).